The sequence spans 22 residues: Hemocyanin subunit 4 (22 aa).

The protein belongs to the tyrosinase family. Hemocyanin subfamily. Hemolymph.

The protein localises to the secreted. The protein resides in the extracellular space. Its function is as follows. Hemocyanins are copper-containing oxygen carriers occurring freely dissolved in the hemolymph of many mollusks and arthropods. The sequence is that of Hemocyanin subunit 4 from Homarus americanus (American lobster).